The following is a 509-amino-acid chain: Bifunctional purine biosynthesis protein PurH (509 aa).

One can recognise an MGS-like domain in the interval 1–146; the sequence is MTIQKINRVL…KNWYRVGVCV (146 aa).

The protein belongs to the PurH family.

It carries out the reaction (6R)-10-formyltetrahydrofolate + 5-amino-1-(5-phospho-beta-D-ribosyl)imidazole-4-carboxamide = 5-formamido-1-(5-phospho-D-ribosyl)imidazole-4-carboxamide + (6S)-5,6,7,8-tetrahydrofolate. The catalysed reaction is IMP + H2O = 5-formamido-1-(5-phospho-D-ribosyl)imidazole-4-carboxamide. It participates in purine metabolism; IMP biosynthesis via de novo pathway; 5-formamido-1-(5-phospho-D-ribosyl)imidazole-4-carboxamide from 5-amino-1-(5-phospho-D-ribosyl)imidazole-4-carboxamide (10-formyl THF route): step 1/1. It functions in the pathway purine metabolism; IMP biosynthesis via de novo pathway; IMP from 5-formamido-1-(5-phospho-D-ribosyl)imidazole-4-carboxamide: step 1/1. This Natranaerobius thermophilus (strain ATCC BAA-1301 / DSM 18059 / JW/NM-WN-LF) protein is Bifunctional purine biosynthesis protein PurH.